The sequence spans 462 residues: Indoleacetamide hydrolase (462 aa).

Residues lysine 74 and serine 149 each act as charge relay system in the active site. The Acyl-ester intermediate role is filled by serine 173.

Belongs to the amidase family.

It participates in plant hormone metabolism; auxin biosynthesis. Its function is as follows. Hydrolyzes indole-3-acetamide (IAM) into indole-3-acetic acid (IAA). In Allorhizobium ampelinum (strain ATCC BAA-846 / DSM 112012 / S4) (Agrobacterium vitis (strain S4)), this protein is Indoleacetamide hydrolase (iaaH).